Here is a 490-residue protein sequence, read N- to C-terminus: Dipeptide and tripeptide permease A (490 aa).

Residues 1-34 (MSNANNNQPENVSLNAFKQPRAFYLIFSIELWER) are Cytoplasmic-facing. Residues 35-55 (FGYYGLQGIMAVYLVKMLGMT) form a helical membrane-spanning segment. Over 56-59 (EADS) the chain is Periplasmic. A helical membrane pass occupies residues 60 to 80 (ITLFSSFSALVYGFVAIGGWL). At 81–89 (GDKVLGAKR) the chain is on the cytoplasmic side. A helical transmembrane segment spans residues 90–110 (VIMLGALVLAIGYAFVAYSGH). Position 111 (D111) is a topological domain, periplasmic. A helical transmembrane segment spans residues 112 to 132 (LSLVYVGMATIAVGNGLFKAN). At 133–153 (PSSLLSTCYEKNDPRLDGAFT) the chain is on the cytoplasmic side. Residues 154 to 174 (MYYMSVNIGSFFSMLATPWLA) traverse the membrane as a helical segment. The Periplasmic segment spans residues 175–176 (AR). Residues 177–197 (FGWSVAFSLSVVGMLITLVNF) traverse the membrane as a helical segment. The Cytoplasmic portion of the chain corresponds to 198-217 (MMCRRWVKDQGSKPDFAPLQ). A helical transmembrane segment spans residues 218–238 (VGKLMMTLVGVVILVAISTWL). Residues 239–246 (LHNQTIAR) lie on the Periplasmic side of the membrane. The helical transmembrane segment at 247 to 267 (WALAIISAGIILIFAKETFAL) threads the bilayer. The Cytoplasmic segment spans residues 268–274 (QGGARRK). Residues 275–295 (MIVAFLLMLEAVVFFVLYSQM) traverse the membrane as a helical segment. At 296–320 (PTSLNFFAIHNVEHSIFGIAFEPEQ) the chain is on the periplasmic side. A helical transmembrane segment spans residues 321 to 341 (YQALNPFWIMVASPILAAIYN). Topologically, residues 342–352 (KMGDRLPMPHK) are cytoplasmic. The helical transmembrane segment at 353 to 373 (FAIGMVLCSGAFLVLPWGASF) threads the bilayer. The Periplasmic portion of the chain corresponds to 374-383 (ANEAGIVSVN). Residues 384 to 404 (WLILSYALQSIGELMISGLGL) form a helical membrane-spanning segment. At 405-414 (AMVAQLVPQR) the chain is on the cytoplasmic side. A helical membrane pass occupies residues 415–435 (LMGFIMGSWFLTTAAAALIAG). The Periplasmic portion of the chain corresponds to 436 to 460 (KVAALTAVPGGEVADPHASLAIYSH). Residues 461 to 481 (VFMQIGLATAVIAVLMLLTAP) traverse the membrane as a helical segment. Topologically, residues 482–490 (KLNRMTLGD) are cytoplasmic.

This sequence belongs to the major facilitator superfamily. Proton-dependent oligopeptide transporter (POT/PTR) (TC 2.A.17) family. DtpA subfamily.

Its subcellular location is the cell inner membrane. Its function is as follows. Proton-dependent permease that transports di- and tripeptides. The sequence is that of Dipeptide and tripeptide permease A from Edwardsiella piscicida.